The sequence spans 483 residues: Acyl-coenzyme A thioesterase 2, mitochondrial (483 aa).

Lysine 104 is modified (N6-acetyllysine). Residues serine 294, aspartate 388, and histidine 422 each act as charge relay system in the active site. Lysine 470 is subject to N6-succinyllysine. The short motif at 481–483 (SKV) is the Microbody targeting signal element.

Belongs to the C/M/P thioester hydrolase family. In terms of assembly, monomer. As to expression, strongest expression in heart, liver, muscle and kidney. Weak in placenta and pancreas.

The protein localises to the mitochondrion. The enzyme catalyses hexadecanoyl-CoA + H2O = hexadecanoate + CoA + H(+). It catalyses the reaction tetradecanoyl-CoA + H2O = tetradecanoate + CoA + H(+). The catalysed reaction is octadecanoyl-CoA + H2O = octadecanoate + CoA + H(+). It carries out the reaction eicosanoyl-CoA + H2O = eicosanoate + CoA + H(+). The enzyme catalyses decanoyl-CoA + H2O = decanoate + CoA + H(+). It catalyses the reaction dodecanoyl-CoA + H2O = dodecanoate + CoA + H(+). The catalysed reaction is (9Z)-octadecenoyl-CoA + H2O = (9Z)-octadecenoate + CoA + H(+). It carries out the reaction (9Z)-hexadecenoyl-CoA + H2O = (9Z)-hexadecenoate + CoA + H(+). The enzyme catalyses (9E)-octadecenoyl-CoA + H2O = (9E)-octadecenoate + CoA + H(+). It catalyses the reaction (9Z,12Z)-octadecadienoyl-CoA + H2O = (9Z,12Z)-octadecadienoate + CoA + H(+). The protein operates within lipid metabolism; fatty acid metabolism. Functionally, catalyzes the hydrolysis of acyl-CoAs into free fatty acids and coenzyme A (CoASH), regulating their respective intracellular levels. Displays higher activity toward long chain acyl CoAs (C14-C20). The enzyme is involved in enhancing the hepatic fatty acid oxidation in mitochondria. In Homo sapiens (Human), this protein is Acyl-coenzyme A thioesterase 2, mitochondrial (ACOT2).